A 303-amino-acid polypeptide reads, in one-letter code: Phosphate import ATP-binding protein PstB (303 aa).

An ABC transporter domain is found at L56–I298. G88–S95 contacts ATP.

The protein belongs to the ABC transporter superfamily. Phosphate importer (TC 3.A.1.7) family. As to quaternary structure, the complex is composed of two ATP-binding proteins (PstB), two transmembrane proteins (PstC and PstA) and a solute-binding protein (PstS).

The protein localises to the cell inner membrane. It carries out the reaction phosphate(out) + ATP + H2O = ADP + 2 phosphate(in) + H(+). Functionally, part of the ABC transporter complex PstSACB involved in phosphate import. Responsible for energy coupling to the transport system. The polypeptide is Phosphate import ATP-binding protein PstB (Acinetobacter baylyi (strain ATCC 33305 / BD413 / ADP1)).